The following is a 113-amino-acid chain: UPF0122 protein MCAP_0480 (113 aa).

Belongs to the UPF0122 family.

Functionally, might take part in the signal recognition particle (SRP) pathway. This is inferred from the conservation of its genetic proximity to ftsY/ffh. May be a regulatory protein. In Mycoplasma capricolum subsp. capricolum (strain California kid / ATCC 27343 / NCTC 10154), this protein is UPF0122 protein MCAP_0480.